The sequence spans 331 residues: Tetraspanin-10 (331 aa).

The tract at residues 1–34 (MKEEECSPLLSQDTAGREHPLTRNSPPTANIPCP) is disordered. Topologically, residues 1–76 (MKEEECSPLL…LSTGSNCVKY (76 aa)) are cytoplasmic. Residues 77–97 (LIFLSNFLFSLPSLLALAAGL) form a helical membrane-spanning segment. The Extracellular segment spans residues 98-120 (WGLTVKRSQGIGWGGPVPTDPML). A helical transmembrane segment spans residues 121-141 (MLVLGGLVVSVVSLSGCLGAF). Residues 142 to 152 (CENSCLLHWYC) lie on the Cytoplasmic side of the membrane. A helical membrane pass occupies residues 153 to 173 (GAVLFCLALEALAGVLMVTLW). The Extracellular portion of the chain corresponds to 174 to 331 (KPLQDSLKYT…AAEDIEAGPL (158 aa)). 4 cysteine pairs are disulfide-bonded: cysteine 210-cysteine 277, cysteine 211-cysteine 241, cysteine 227-cysteine 235, and cysteine 242-cysteine 256. Asparagine 226 carries an N-linked (GlcNAc...) asparagine glycan.

This sequence belongs to the tetraspanin (TM4SF) family. As to quaternary structure, interacts with ADAM10.

The protein resides in the cell membrane. Its function is as follows. Part of TspanC8 subgroup, composed of 6 members that interact with the transmembrane metalloprotease ADAM10. This interaction is required for ADAM10 exit from the endoplasmic reticulum and for enzymatic maturation and trafficking to the cell surface as well as substrate specificity. Different TspanC8/ADAM10 complexes have distinct substrates. The protein is Tetraspanin-10 (Tspan10) of Mus musculus (Mouse).